The primary structure comprises 450 residues: BAG family molecular chaperone regulator 5 (450 aa).

5 consecutive BAG domains span residues 9 to 86 (SIKR…EQNA), 95 to 167 (EAIF…ESCA), 182 to 260 (SVSK…DLDE), 275 to 350 (SILK…DLKE), and 365 to 442 (EHQS…YYLD).

As to quaternary structure, binds to the ATPase domain of HSP/HSC70 chaperones.

Co-chaperone for HSP/HSP70 proteins. It functions as a nucleotide-exchange factor promoting the release of ADP from HSP70, thereby activating HSP70-mediated protein refolding. This chain is BAG family molecular chaperone regulator 5 (BAG5), found in Gallus gallus (Chicken).